Consider the following 213-residue polypeptide: Small ribosomal subunit protein uS4 (213 aa).

The disordered stretch occupies residues 16 to 53 (GTDLGLKSGVKPYDVKTKKSARPPGQHGVSRNKSSEYS). Residues 44 to 53 (VSRNKSSEYS) are compositionally biased toward polar residues. Residues 97–163 (SRLDNVVYRM…EKSREQLRIK (67 aa)) enclose the S4 RNA-binding domain.

Belongs to the universal ribosomal protein uS4 family. Part of the 30S ribosomal subunit. Contacts protein S5. The interaction surface between S4 and S5 is involved in control of translational fidelity.

One of the primary rRNA binding proteins, it binds directly to 16S rRNA where it nucleates assembly of the body of the 30S subunit. Functionally, with S5 and S12 plays an important role in translational accuracy. In Psychrobacter cryohalolentis (strain ATCC BAA-1226 / DSM 17306 / VKM B-2378 / K5), this protein is Small ribosomal subunit protein uS4.